A 344-amino-acid polypeptide reads, in one-letter code: MDADMIPKFTTKEEEIDFWKALSLKYKKSYKEAQEELLEFQEGSRELETELETQLGQAEHRIRDLQADNQRLQHELDSLKEKLEYQYAQSYKQISVLEDDLSQTRGIKEQLHKYVRELEQANDDLERAKRATITSLEDFEQRLNQAIERNAFLESELDEKESLLVSVQRLKDEARDLRQELAVRDTRSEVTRMSAPSSPTPDNDKTDSAVQASLSLPATPLSKNLDNAFTSQTVLANGSTNAALTPSARISALNIVGDLLRKVGALESKLAACRNFAKDQAARKNYVTNVNGNLINGDISNYSHSLHTSYFDKARTVNGLDPGDGTHITAPPRSNSPSGLVLSV.

Positions 26–187 form a coiled coil; the sequence is YKKSYKEAQE…RQELAVRDTR (162 aa). Residues 181 to 190 show a composition bias toward basic and acidic residues; sequence LAVRDTRSEV. Disordered regions lie at residues 181-209 and 322-344; these read LAVRDTRSEVTRMSAPSSPTPDNDKTDSA and PGDGTHITAPPRSNSPSGLVLSV.

The protein belongs to the nudE family. In terms of processing, phosphorylated in mitosis.

The protein localises to the cytoplasm. It localises to the cytoskeleton. Its subcellular location is the microtubule organizing center. It is found in the centrosome. The protein resides in the spindle. Functionally, required for organization of the cellular microtubule array and microtubule anchoring at the centrosome. Positively regulates the activity of the minus-end directed microtubule motor protein dynein. May enhance dynein-mediated microtubule sliding by targeting dynein to the microtubule plus end. This is Nuclear distribution protein nudE-like 1-A (ndel1a) from Danio rerio (Zebrafish).